We begin with the raw amino-acid sequence, 321 residues long: Phospho-N-acetylmuramoyl-pentapeptide-transferase (321 aa).

The next 10 helical transmembrane spans lie at 1–21 (MIFVYALLALVITFVLVPVLI), 50–70 (MGGLTFLLSIVITSLVVIIFV), 76–96 (IILLLFVTIGFGLIGFIDDYI), 112–132 (FLAQIGIAIIFFVLSNVFHLV), 140–160 (IPFTNVAIPLSFAYVIFIVFW), 176–196 (GLATGLSIIGFTMYAIMSFVL), 200–220 (AIGIFCIIMLFALLGFLPYNI), 225–245 (VFMGDTGSLALGGIFATISIM), 250–270 (LSLIFIGLVFVIETLSVMLQV), and 300–320 (VVTVFWAVGLISGLIGLWIGV).

Belongs to the glycosyltransferase 4 family. MraY subfamily. Mg(2+) is required as a cofactor.

It localises to the cell membrane. The catalysed reaction is UDP-N-acetyl-alpha-D-muramoyl-L-alanyl-gamma-D-glutamyl-L-lysyl-D-alanyl-D-alanine + di-trans,octa-cis-undecaprenyl phosphate = Mur2Ac(oyl-L-Ala-gamma-D-Glu-L-Lys-D-Ala-D-Ala)-di-trans,octa-cis-undecaprenyl diphosphate + UMP. The protein operates within cell wall biogenesis; peptidoglycan biosynthesis. Its function is as follows. Catalyzes the initial step of the lipid cycle reactions in the biosynthesis of the cell wall peptidoglycan: transfers peptidoglycan precursor phospho-MurNAc-pentapeptide from UDP-MurNAc-pentapeptide onto the lipid carrier undecaprenyl phosphate, yielding undecaprenyl-pyrophosphoryl-MurNAc-pentapeptide, known as lipid I. This Staphylococcus aureus (strain MSSA476) protein is Phospho-N-acetylmuramoyl-pentapeptide-transferase.